We begin with the raw amino-acid sequence, 122 residues long: Large ribosomal subunit protein uL14 (122 aa).

This sequence belongs to the universal ribosomal protein uL14 family. As to quaternary structure, part of the 50S ribosomal subunit. Forms a cluster with proteins L3 and L19. In the 70S ribosome, L14 and L19 interact and together make contacts with the 16S rRNA in bridges B5 and B8.

Functionally, binds to 23S rRNA. Forms part of two intersubunit bridges in the 70S ribosome. The polypeptide is Large ribosomal subunit protein uL14 (Caulobacter sp. (strain K31)).